The following is a 307-amino-acid chain: Regulating synaptic membrane exocytosis protein 3 (307 aa).

The segment at serine 86–threonine 120 is disordered. Residues aspartate 109–glycine 119 are compositionally biased toward polar residues. The region spanning proline 155–tyrosine 273 is the C2 domain. Phosphoserine is present on residues serine 294 and serine 297.

As to quaternary structure, binds PPFIA3. Does not bind RAB3. As to expression, expressed exclusively in brain with significant levels in cortex, cerebellum and olfactory bulb. Detected at lower level in hippocampus.

It is found in the synapse. Functionally, regulates synaptic membrane exocytosis. The polypeptide is Regulating synaptic membrane exocytosis protein 3 (Rims3) (Rattus norvegicus (Rat)).